The following is a 212-amino-acid chain: Glutathione S-transferase P 1 (212 aa).

The GST N-terminal domain maps to 2–83 (PGYVLTYFPV…YLGNKHGLTG (82 aa)). Glutathione is bound by residues Y8, R14, W39, K47, 54–55 (QL), and 67–68 (QS). One can recognise a GST C-terminal domain in the interval 85–206 (NDEERGHIDM…KSDARNKRPI (122 aa)).

The protein belongs to the GST superfamily. Pi family. As to quaternary structure, homodimer. Expressed only in embryos. Not expressed in liver, lung, heart, kidney and ovary.

It localises to the cytoplasm. The protein localises to the mitochondrion. It is found in the nucleus. It catalyses the reaction RX + glutathione = an S-substituted glutathione + a halide anion + H(+). In terms of biological role, conjugation of reduced glutathione to a wide number of exogenous and endogenous hydrophobic electrophiles. Highly active towards 1-chloro-2,4-dinitrobenzene and organic isothiocyanates, but shows no detectable activity towards 1,2-dichloro-4-nitrobenzene, p-nitrobenzylchloride, trans-4-phenyl-3-buten-2-one (tPBO) and ethacrynic acid. May be associated with cellular proliferation. The chain is Glutathione S-transferase P 1 (gstp1) from Xenopus laevis (African clawed frog).